Reading from the N-terminus, the 277-residue chain is Phosphate import ATP-binding protein PstB 2 (277 aa).

The ABC transporter domain occupies 31-272 (IEVPGLSLFY…PAKKQTEDYI (242 aa)). 63–70 (GPSGCGKS) provides a ligand contact to ATP.

This sequence belongs to the ABC transporter superfamily. Phosphate importer (TC 3.A.1.7) family. The complex is composed of two ATP-binding proteins (PstB), two transmembrane proteins (PstC and PstA) and a solute-binding protein (PstS).

The protein localises to the cell inner membrane. The enzyme catalyses phosphate(out) + ATP + H2O = ADP + 2 phosphate(in) + H(+). Part of the ABC transporter complex PstSACB involved in phosphate import. Responsible for energy coupling to the transport system. This Pseudomonas putida (strain ATCC 47054 / DSM 6125 / CFBP 8728 / NCIMB 11950 / KT2440) protein is Phosphate import ATP-binding protein PstB 2.